The primary structure comprises 359 residues: N-acetyl-gamma-glutamyl-phosphate reductase (359 aa).

The active site involves Cys162.

It belongs to the NAGSA dehydrogenase family. Type 1 subfamily.

Its subcellular location is the cytoplasm. The enzyme catalyses N-acetyl-L-glutamate 5-semialdehyde + phosphate + NADP(+) = N-acetyl-L-glutamyl 5-phosphate + NADPH + H(+). Its pathway is amino-acid biosynthesis; L-arginine biosynthesis; N(2)-acetyl-L-ornithine from L-glutamate: step 3/4. Catalyzes the NADPH-dependent reduction of N-acetyl-5-glutamyl phosphate to yield N-acetyl-L-glutamate 5-semialdehyde. The protein is N-acetyl-gamma-glutamyl-phosphate reductase of Prochlorococcus marinus (strain NATL1A).